The primary structure comprises 206 residues: N-(5'-phosphoribosyl)anthranilate isomerase (206 aa).

This sequence belongs to the TrpF family.

It carries out the reaction N-(5-phospho-beta-D-ribosyl)anthranilate = 1-(2-carboxyphenylamino)-1-deoxy-D-ribulose 5-phosphate. It participates in amino-acid biosynthesis; L-tryptophan biosynthesis; L-tryptophan from chorismate: step 3/5. The sequence is that of N-(5'-phosphoribosyl)anthranilate isomerase from Chlamydia caviae (strain ATCC VR-813 / DSM 19441 / 03DC25 / GPIC) (Chlamydophila caviae).